A 360-amino-acid polypeptide reads, in one-letter code: UDP-3-O-acylglucosamine N-acyltransferase (360 aa).

His256 (proton acceptor) is an active-site residue. Residues 341 to 360 (EGSGAETAARPDDDRDEGRG) are disordered. Over residues 349-360 (ARPDDDRDEGRG) the composition is skewed to basic and acidic residues.

It belongs to the transferase hexapeptide repeat family. LpxD subfamily. Homotrimer.

The enzyme catalyses a UDP-3-O-[(3R)-3-hydroxyacyl]-alpha-D-glucosamine + a (3R)-hydroxyacyl-[ACP] = a UDP-2-N,3-O-bis[(3R)-3-hydroxyacyl]-alpha-D-glucosamine + holo-[ACP] + H(+). Its pathway is bacterial outer membrane biogenesis; LPS lipid A biosynthesis. Its function is as follows. Catalyzes the N-acylation of UDP-3-O-acylglucosamine using 3-hydroxyacyl-ACP as the acyl donor. Is involved in the biosynthesis of lipid A, a phosphorylated glycolipid that anchors the lipopolysaccharide to the outer membrane of the cell. This Rhodopseudomonas palustris (strain ATCC BAA-98 / CGA009) protein is UDP-3-O-acylglucosamine N-acyltransferase.